The following is a 41-amino-acid chain: RMPSLSIDLPMSVLRQKLSLEKERKVQALRAAANRNFLNDI.

Residue isoleucine 41 is modified to Isoleucine amide.

It localises to the secreted. Functionally, regulation of fluid secretion. May stimulate primary urine secretion by Malpighian tubules and causes a dose-dependent stimulation of cAMP levels in the tubules. This is Diuretic hormone 1 from Hyles lineata (White-lined sphinx moth).